A 401-amino-acid chain; its full sequence is Nicotinate phosphoribosyltransferase (401 aa).

Residue histidine 224 is modified to Phosphohistidine; by autocatalysis.

The protein belongs to the NAPRTase family. Transiently phosphorylated on a His residue during the reaction cycle. Phosphorylation strongly increases the affinity for substrates and increases the rate of nicotinate D-ribonucleotide production. Dephosphorylation regenerates the low-affinity form of the enzyme, leading to product release.

The catalysed reaction is nicotinate + 5-phospho-alpha-D-ribose 1-diphosphate + ATP + H2O = nicotinate beta-D-ribonucleotide + ADP + phosphate + diphosphate. Its pathway is cofactor biosynthesis; NAD(+) biosynthesis; nicotinate D-ribonucleotide from nicotinate: step 1/1. Functionally, catalyzes the synthesis of beta-nicotinate D-ribonucleotide from nicotinate and 5-phospho-D-ribose 1-phosphate at the expense of ATP. The protein is Nicotinate phosphoribosyltransferase of Pseudomonas putida (strain ATCC 47054 / DSM 6125 / CFBP 8728 / NCIMB 11950 / KT2440).